The following is a 70-amino-acid chain: Putative membrane protein insertion efficiency factor (70 aa).

Belongs to the UPF0161 family.

It is found in the cell membrane. Functionally, could be involved in insertion of integral membrane proteins into the membrane. The protein is Putative membrane protein insertion efficiency factor of Rubrobacter xylanophilus (strain DSM 9941 / JCM 11954 / NBRC 16129 / PRD-1).